A 91-amino-acid polypeptide reads, in one-letter code: Large ribosomal subunit protein eL34 (91 aa).

Residues Arg-48–Pro-69 form a disordered region.

Belongs to the eukaryotic ribosomal protein eL34 family.

This chain is Large ribosomal subunit protein eL34 (rpl34e), found in Pyrococcus horikoshii (strain ATCC 700860 / DSM 12428 / JCM 9974 / NBRC 100139 / OT-3).